The primary structure comprises 270 residues: tRNA pseudouridine synthase A (270 aa).

The active-site Nucleophile is the Asp51. Tyr109 serves as a coordination point for substrate.

This sequence belongs to the tRNA pseudouridine synthase TruA family. In terms of assembly, homodimer.

The catalysed reaction is uridine(38/39/40) in tRNA = pseudouridine(38/39/40) in tRNA. Formation of pseudouridine at positions 38, 39 and 40 in the anticodon stem and loop of transfer RNAs. The sequence is that of tRNA pseudouridine synthase A from Burkholderia ambifaria (strain ATCC BAA-244 / DSM 16087 / CCUG 44356 / LMG 19182 / AMMD) (Burkholderia cepacia (strain AMMD)).